Consider the following 509-residue polypeptide: Glycogen synthase (509 aa).

Lys-47 is an ADP-alpha-D-glucose binding site.

Belongs to the glycosyltransferase 1 family. Bacterial/plant glycogen synthase subfamily.

It catalyses the reaction [(1-&gt;4)-alpha-D-glucosyl](n) + ADP-alpha-D-glucose = [(1-&gt;4)-alpha-D-glucosyl](n+1) + ADP + H(+). It functions in the pathway glycan biosynthesis; glycogen biosynthesis. Functionally, synthesizes alpha-1,4-glucan chains using ADP-glucose. The protein is Glycogen synthase of Xanthomonas oryzae pv. oryzae (strain PXO99A).